The chain runs to 491 residues: Ketol-acid reductoisomerase (NADP(+)) (491 aa).

The 194-residue stretch at 15–208 (AQLGKCRFMG…GGHRAGVLES (194 aa)) folds into the KARI N-terminal Rossmann domain. Residues 45-48 (CGAQ), R68, R76, S78, and 108-110 (DKQ) each bind NADP(+). Residue H132 is part of the active site. G158 lines the NADP(+) pocket. 2 consecutive KARI C-terminal knotted domains span residues 209 to 344 (SFVA…TAPQ) and 345 to 484 (FEGK…MTDM). Residues D217, E221, E389, and E393 each contribute to the Mg(2+) site. S414 lines the substrate pocket.

Belongs to the ketol-acid reductoisomerase family. The cofactor is Mg(2+).

It carries out the reaction (2R)-2,3-dihydroxy-3-methylbutanoate + NADP(+) = (2S)-2-acetolactate + NADPH + H(+). The enzyme catalyses (2R,3R)-2,3-dihydroxy-3-methylpentanoate + NADP(+) = (S)-2-ethyl-2-hydroxy-3-oxobutanoate + NADPH + H(+). Its pathway is amino-acid biosynthesis; L-isoleucine biosynthesis; L-isoleucine from 2-oxobutanoate: step 2/4. It functions in the pathway amino-acid biosynthesis; L-valine biosynthesis; L-valine from pyruvate: step 2/4. Involved in the biosynthesis of branched-chain amino acids (BCAA). Catalyzes an alkyl-migration followed by a ketol-acid reduction of (S)-2-acetolactate (S2AL) to yield (R)-2,3-dihydroxy-isovalerate. In the isomerase reaction, S2AL is rearranged via a Mg-dependent methyl migration to produce 3-hydroxy-3-methyl-2-ketobutyrate (HMKB). In the reductase reaction, this 2-ketoacid undergoes a metal-dependent reduction by NADPH to yield (R)-2,3-dihydroxy-isovalerate. The chain is Ketol-acid reductoisomerase (NADP(+)) from Salmonella choleraesuis (strain SC-B67).